Consider the following 181-residue polypeptide: NADH-quinone oxidoreductase subunit B (181 aa).

[4Fe-4S] cluster is bound by residues Cys-60, Cys-61, Cys-125, and Cys-155.

The protein belongs to the complex I 20 kDa subunit family. In terms of assembly, NDH-1 is composed of 14 different subunits. Subunits NuoB, C, D, E, F, and G constitute the peripheral sector of the complex. The cofactor is [4Fe-4S] cluster.

Its subcellular location is the cell inner membrane. It carries out the reaction a quinone + NADH + 5 H(+)(in) = a quinol + NAD(+) + 4 H(+)(out). Functionally, NDH-1 shuttles electrons from NADH, via FMN and iron-sulfur (Fe-S) centers, to quinones in the respiratory chain. Couples the redox reaction to proton translocation (for every two electrons transferred, four hydrogen ions are translocated across the cytoplasmic membrane), and thus conserves the redox energy in a proton gradient. The chain is NADH-quinone oxidoreductase subunit B from Novosphingobium aromaticivorans (strain ATCC 700278 / DSM 12444 / CCUG 56034 / CIP 105152 / NBRC 16084 / F199).